Reading from the N-terminus, the 103-residue chain is Small ribosomal subunit protein bS6c (103 aa).

It belongs to the bacterial ribosomal protein bS6 family.

It is found in the plastid. The protein resides in the chloroplast. In terms of biological role, binds together with bS18 to 16S ribosomal RNA. The polypeptide is Small ribosomal subunit protein bS6c (Gracilaria tenuistipitata var. liui (Red alga)).